The primary structure comprises 1200 residues: MNRLLQKGTSLVPSWRTRGCRYRRCSYAPQLHAKPLEMETSQRRMNPLNIQMLSKGFHEQIFRGKQVQHAEEDVQRSITHLKNHELWGQETSTVPDVELQLPKMYGNNIEEHFQILAQKQSLPYLEAANDLLNCQLPAMPQTWAWQSGWTRYTATGEKELVDFPDEKAMVFDVEVCVTEGCCPTLAVAASPQNWYSWCSRRLIEGRYTWSKELLLSDLFPLETSMNCNYMTKNNWTERLVVGHNVSFDRAHIKEQYLIKGSKTRFMDTMSMHMAISGLTGFQRTLWMASKYGKKKGLQEVKQHIKKTRSNFSGSPISSWDWVNISSINNLADVHALYVGGPPLEKEARELFVKGSMSDIRTEFQELMRYCALDVQATHEVFQEQFPLFMERCPHPVTLSGMLEMGVSYLPVNQNWERYLDEAQTSYEELQKEMKKSLMKLANDACQLLTKDAYKEDPWLWDLEWDIQESKQKKTKISKKQKKANEAAESVGNKLVEDHNEDPGPPTEKEESRPSMGKLYLEDLKLKTLPLLPKRNQHLPGHPGWYRKLCPKLEDPDWLPGPGLISLQMRLTPKLMRLTWDGYPLHYSEKHGWGYLVPGRKNNKLNNEEEEEIIPCPYRAIEDIYAEYSKNKTKDGCLSQHSTIPEEFMLTDDNSMWQKVEELSRTEMDLSSEVPATAKAKKRNNSSEHPVKLEMEFDSLPDNHHGNSPCGDVNVSGCWFYKLPHKDGNANNVGSPFAKDFLPKMEDGTLQASTGDSSATRALEINKMISFWRNAHKRISSQMVVWMKKNELHRTITRDPEFDEENKYGAILAQVVSAGTITRRAVEPTWLTASNARADRVGSELKAMVQVPPGYHLIGADVDSQELWIAAILGEAHFAGIHGCTAFGWMTLQGKKSSGTDLHSKTASTVGISREHAKVFNYGRIYGAGQPFAERLLMQFNHRLTQEQAAEKAKQMYAVTKGIRRYILSKEGEWLVEELGISVERGEENSVNLQDLRKIQKDATKRSRRKWNLVSRRIWTGGTESQMFNKLETIAMSPSPKTPVLGCRISRALEPTAVKGEFITSRVNWVVQSSAVDYLHLMLVAMKWLFEAYDIDGRFCISIHDEVRYLVHSKDRYRAALALQITNLLTRCMFASRLGIQDVPQSVAFFSAVDIDKCLRKEVTMDCSTPSNPNGMEKRYGIPQGEALDIYQILKVTKGVL.

2 disordered regions span residues 471 to 515 (QKKT…RPSM) and 667 to 688 (MDLS…SSEH). Residues 472–481 (KKTKISKKQK) are compositionally biased toward basic residues. Over residues 494–512 (LVEDHNEDPGPPTEKEESR) the composition is skewed to basic and acidic residues.

The protein belongs to the DNA polymerase type-A family. Heterotrimer composed of a catalytic subunit and a homodimer of accessory subunits. Mg(2+) is required as a cofactor.

The protein localises to the mitochondrion. The protein resides in the mitochondrion matrix. It is found in the mitochondrion nucleoid. It catalyses the reaction DNA(n) + a 2'-deoxyribonucleoside 5'-triphosphate = DNA(n+1) + diphosphate. Functionally, involved in the replication of mitochondrial DNA. Associates with mitochondrial DNA. This Xenopus laevis (African clawed frog) protein is DNA polymerase subunit gamma-1 (polg).